Consider the following 161-residue polypeptide: MGGGNPVVAQMWKLVEPVCSAEGMELVFVEFNKESQGRVLRLYLASGVPDRGVTLEDCAGISRQVNGLLDVYLPELDNYTLEVSSAGLERPLAKEIDFERFAGSRVKIRTAAPVSDRKNFTGILLGVSDGNVRLMVDDKTFVIPYGEITRAKLVNEDGVSQ.

Belongs to the RimP family.

The protein resides in the cytoplasm. Functionally, required for maturation of 30S ribosomal subunits. The sequence is that of Ribosome maturation factor RimP from Desulfosudis oleivorans (strain DSM 6200 / JCM 39069 / Hxd3) (Desulfococcus oleovorans).